A 413-amino-acid polypeptide reads, in one-letter code: Gamma-glutamyl phosphate reductase (413 aa).

Belongs to the gamma-glutamyl phosphate reductase family.

The protein localises to the cytoplasm. The enzyme catalyses L-glutamate 5-semialdehyde + phosphate + NADP(+) = L-glutamyl 5-phosphate + NADPH + H(+). It participates in amino-acid biosynthesis; L-proline biosynthesis; L-glutamate 5-semialdehyde from L-glutamate: step 2/2. In terms of biological role, catalyzes the NADPH-dependent reduction of L-glutamate 5-phosphate into L-glutamate 5-semialdehyde and phosphate. The product spontaneously undergoes cyclization to form 1-pyrroline-5-carboxylate. This is Gamma-glutamyl phosphate reductase from Salinispora tropica (strain ATCC BAA-916 / DSM 44818 / JCM 13857 / NBRC 105044 / CNB-440).